Here is a 264-residue protein sequence, read N- to C-terminus: 1-(5-phosphoribosyl)-5-[(5-phosphoribosylamino)methylideneamino] imidazole-4-carboxamide isomerase (264 aa).

Belongs to the HisA/HisF family.

The protein resides in the cytoplasm. It carries out the reaction 1-(5-phospho-beta-D-ribosyl)-5-[(5-phospho-beta-D-ribosylamino)methylideneamino]imidazole-4-carboxamide = 5-[(5-phospho-1-deoxy-D-ribulos-1-ylimino)methylamino]-1-(5-phospho-beta-D-ribosyl)imidazole-4-carboxamide. The protein operates within amino-acid biosynthesis; L-histidine biosynthesis; L-histidine from 5-phospho-alpha-D-ribose 1-diphosphate: step 4/9. This is 1-(5-phosphoribosyl)-5-[(5-phosphoribosylamino)methylideneamino] imidazole-4-carboxamide isomerase (HIS6) from Yarrowia lipolytica (strain CLIB 122 / E 150) (Yeast).